The chain runs to 114 residues: Histone H3-3 (114 aa).

Residues 1-17 show a composition bias toward basic residues; sequence NTGGKAPRKHIAHKQAK. The segment at 1–32 is disordered; that stretch reads NTGGKAPRKHIAHKQAKKSSAAAATGGVKKPH. The segment covering 18–28 has biased composition (low complexity); the sequence is KSSAAAATGGV.

Belongs to the histone H3 family. As to quaternary structure, the nucleosome is a histone octamer containing two molecules each of H2A, H2B, H3 and H4 assembled in one H3-H4 heterotetramer and two H2A-H2B heterodimers. The octamer wraps approximately 147 bp of DNA.

The protein resides in the nucleus. The protein localises to the chromosome. In terms of biological role, core component of nucleosome. Nucleosomes wrap and compact DNA into chromatin, limiting DNA accessibility to the cellular machineries which require DNA as a template. Histones thereby play a central role in transcription regulation, DNA repair, DNA replication and chromosomal stability. DNA accessibility is regulated via a complex set of post-translational modifications of histones, also called histone code, and nucleosome remodeling. The sequence is that of Histone H3-3 (H3-3) from Stylonychia lemnae (Ciliate).